Reading from the N-terminus, the 219-residue chain is Izumo sperm-egg fusion protein 4 (219 aa).

A signal peptide spans Met-1 to Ala-15. The N-linked (GlcNAc...) asparagine glycan is linked to Asn-206.

The protein belongs to the Izumo family.

The protein localises to the secreted. The polypeptide is Izumo sperm-egg fusion protein 4 (IZUMO4) (Macaca fascicularis (Crab-eating macaque)).